Reading from the N-terminus, the 159-residue chain is Ribosome maturation factor RimP (159 aa).

Belongs to the RimP family.

Its subcellular location is the cytoplasm. Its function is as follows. Required for maturation of 30S ribosomal subunits. The protein is Ribosome maturation factor RimP of Streptococcus pneumoniae serotype 19F (strain G54).